Here is a 409-residue protein sequence, read N- to C-terminus: Putative integrase/recombinase y4rA (409 aa).

Residues 112–197 form the Core-binding (CB) domain; that stretch reads SAVEQHVQAY…ALRSFLSYAR (86 aa). Positions 220–402 constitute a Tyr recombinase domain; sequence SIPRAIGRDD…DLDALRTLAL (183 aa). Residues Arg-260, Lys-284, His-354, Arg-357, and His-380 contribute to the active site. Tyr-389 serves as the catalytic O-(3'-phospho-DNA)-tyrosine intermediate.

The protein belongs to the 'phage' integrase family.

The sequence is that of Putative integrase/recombinase y4rA from Sinorhizobium fredii (strain NBRC 101917 / NGR234).